The primary structure comprises 874 residues: Alanine--tRNA ligase (874 aa).

Residues histidine 563, histidine 567, cysteine 665, and histidine 669 each contribute to the Zn(2+) site.

This sequence belongs to the class-II aminoacyl-tRNA synthetase family. Zn(2+) serves as cofactor.

It localises to the cytoplasm. The catalysed reaction is tRNA(Ala) + L-alanine + ATP = L-alanyl-tRNA(Ala) + AMP + diphosphate. Catalyzes the attachment of alanine to tRNA(Ala) in a two-step reaction: alanine is first activated by ATP to form Ala-AMP and then transferred to the acceptor end of tRNA(Ala). Also edits incorrectly charged Ser-tRNA(Ala) and Gly-tRNA(Ala) via its editing domain. The chain is Alanine--tRNA ligase from Haemophilus influenzae (strain PittGG).